The primary structure comprises 467 residues: Fumarate hydratase class II (467 aa).

Residues 98–100, arginine 126, 129–132, 139–141, and threonine 187 contribute to the substrate site; these read SGT, HPND, and SSN. Histidine 188 serves as the catalytic Proton donor/acceptor. The active site involves serine 318. Residues serine 319 and 324–326 contribute to the substrate site; that span reads KVN.

It belongs to the class-II fumarase/aspartase family. Fumarase subfamily. In terms of assembly, homotetramer.

The protein resides in the cytoplasm. It catalyses the reaction (S)-malate = fumarate + H2O. Its pathway is carbohydrate metabolism; tricarboxylic acid cycle; (S)-malate from fumarate: step 1/1. Functionally, involved in the TCA cycle. Catalyzes the stereospecific interconversion of fumarate to L-malate. The sequence is that of Fumarate hydratase class II from Salmonella typhimurium (strain LT2 / SGSC1412 / ATCC 700720).